A 63-amino-acid chain; its full sequence is Large ribosomal subunit protein eL37 (63 aa).

4 residues coordinate Zn(2+): Cys20, Cys23, Cys35, and Cys38. Residues 20 to 38 form a C4-type zinc finger; it reads CRRCGHHSFNVRKGYCAHC.

This sequence belongs to the eukaryotic ribosomal protein eL37 family. It depends on Zn(2+) as a cofactor.

Functionally, binds to the 23S rRNA. The chain is Large ribosomal subunit protein eL37 from Thermofilum pendens (strain DSM 2475 / Hrk 5).